Consider the following 309-residue polypeptide: Pyrroline-5-carboxylate reductase 1, mitochondrial (309 aa).

S2 carries the N-acetylserine modification. Residues 6–11 (IGAGQL) and S34 contribute to the NADP(+) site. A8, Q10, L11, S34, D36, N56, V70, K71, and A97 together coordinate NADPH. Residues N56, 69 to 72 (AVKP), and 95 to 97 (CAA) contribute to the NADP(+) site. E164 is a binding site for L-proline. N230 contributes to the NADPH binding site. A237 and T238 together coordinate L-proline. A phosphoserine mark is found at S278 and S301.

The protein belongs to the pyrroline-5-carboxylate reductase family. In terms of assembly, homodecamer; composed of 5 homodimers. Interacts with LTO1. In terms of tissue distribution, highly expressed in osteoblasts and skin.

It is found in the mitochondrion. It carries out the reaction L-proline + NADP(+) = (S)-1-pyrroline-5-carboxylate + NADPH + 2 H(+). The catalysed reaction is L-proline + NAD(+) = (S)-1-pyrroline-5-carboxylate + NADH + 2 H(+). It functions in the pathway amino-acid biosynthesis; L-proline biosynthesis; L-proline from L-glutamate 5-semialdehyde: step 1/1. Its function is as follows. Oxidoreductase that catalyzes the last step in proline biosynthesis, which corresponds to the reduction of pyrroline-5-carboxylate to L-proline using NAD(P)H. At physiologic concentrations, has higher specific activity in the presence of NADH. Involved in the cellular response to oxidative stress. The protein is Pyrroline-5-carboxylate reductase 1, mitochondrial of Mus musculus (Mouse).